Reading from the N-terminus, the 402-residue chain is Prostaglandin E2 receptor EP1 subtype (402 aa).

Residues 1–35 (MSPCGPLNLSLAGEATTCAAPWVPNTSAVPPSGAS) are Extracellular-facing. Residues asparagine 8 and asparagine 25 are each glycosylated (N-linked (GlcNAc...) asparagine). A helical membrane pass occupies residues 36–62 (PALPIFSMTLGAVSNLLALALLAQAAG). At 63 to 72 (RLRRRRSAAT) the chain is on the cytoplasmic side. The chain crosses the membrane as a helical span at residues 73 to 96 (FLLFVASLLATDLAGHVIPGALVL). The Extracellular portion of the chain corresponds to 97–111 (RLYTAGRAPAGGACH). An intrachain disulfide couples cysteine 110 to cysteine 188. A helical transmembrane segment spans residues 112-133 (FLGGCMVFFGLCPLLLGCGMAV). Residues 134–155 (ERCVGVTRPLLHAARVSVARAR) lie on the Cytoplasmic side of the membrane. A helical membrane pass occupies residues 156–177 (LALAAVAAVALAVALLPLARVG). At 178–201 (RYELQYPGTWCFIGLGPPGGWRQA) the chain is on the extracellular side. A helical membrane pass occupies residues 202–227 (LLAGLFASLGLVALLAALVCNTLSGL). The Cytoplasmic segment spans residues 228–294 (ALLRARWRRR…ARRARAHDVE (67 aa)). Positions 238–266 (SRRPPPASGPDSRRRWGAHGPRSASASSA) are disordered. A helical membrane pass occupies residues 295–321 (MVGQLVGIMVVSCICWSPMLVLVALAV). Residues 322–332 (GGWSSTSLQRP) lie on the Extracellular side of the membrane. A helical membrane pass occupies residues 333-354 (LFLAVRLASWNQILDPWVYILL). The Cytoplasmic segment spans residues 355 to 402 (RQAVLRQLLRLLPPRAGAKGGPAGLGLTPSAWEASSLRSSRHSGLSHF).

Belongs to the G-protein coupled receptor 1 family. Phosphorylated. As to expression, abundant in kidney. Lower level expression in lung, skeletal muscle and spleen, lowest expression in testis and not detected in liver brain and heart.

The protein resides in the cell membrane. Receptor for prostaglandin E2 (PGE2). The activity of this receptor is mediated by G(q) proteins which activate a phosphatidylinositol-calcium second messenger system. May play a role as an important modulator of renal function. Implicated the smooth muscle contractile response to PGE2 in various tissues. This chain is Prostaglandin E2 receptor EP1 subtype (PTGER1), found in Homo sapiens (Human).